The primary structure comprises 143 residues: Holo-[acyl-carrier-protein] synthase (143 aa).

Positions 9 and 63 each coordinate Mg(2+).

Belongs to the P-Pant transferase superfamily. AcpS family. Requires Mg(2+) as cofactor.

The protein localises to the cytoplasm. It carries out the reaction apo-[ACP] + CoA = holo-[ACP] + adenosine 3',5'-bisphosphate + H(+). Functionally, transfers the 4'-phosphopantetheine moiety from coenzyme A to a Ser of acyl-carrier-protein. The protein is Holo-[acyl-carrier-protein] synthase of Burkholderia pseudomallei (strain 668).